We begin with the raw amino-acid sequence, 625 residues long: tRNA uridine 5-carboxymethylaminomethyl modification enzyme MnmG (625 aa).

Residues Gly-11 to Gly-16, Val-123, and Ser-178 each bind FAD. Gly-271–Phe-285 is a binding site for NAD(+). An FAD-binding site is contributed by Gln-368.

It belongs to the MnmG family. Homodimer. Heterotetramer of two MnmE and two MnmG subunits. The cofactor is FAD.

The protein resides in the cytoplasm. NAD-binding protein involved in the addition of a carboxymethylaminomethyl (cmnm) group at the wobble position (U34) of certain tRNAs, forming tRNA-cmnm(5)s(2)U34. The protein is tRNA uridine 5-carboxymethylaminomethyl modification enzyme MnmG of Bacteroides fragilis (strain ATCC 25285 / DSM 2151 / CCUG 4856 / JCM 11019 / LMG 10263 / NCTC 9343 / Onslow / VPI 2553 / EN-2).